Reading from the N-terminus, the 312-residue chain is Expansin-A24 (312 aa).

The N-terminal stretch at 1-27 is a signal peptide; sequence MELLKRKLYAKILMMVMVIWIAPMTNG. The segment at 31-86 is disordered; that stretch reads ASHVPGGRPGAHPSHGAHPAHGAHPSHGAHPSHGAHPSHGAHPSHGALPSHGGQVP. Over residues 40-77 the composition is skewed to low complexity; the sequence is GAHPSHGAHPAHGAHPSHGAHPSHGAHPSHGAHPSHGA. 6 consecutive repeat copies span residues 42-47, 48-53, 54-59, 60-65, 66-71, and 72-77. The tract at residues 42–77 is 6 X 6 AA tandem repeats of H-P-S-H-G-A; it reads HPSHGAHPAHGAHPSHGAHPSHGAHPSHGAHPSHGA. One can recognise an Expansin-like EG45 domain in the interval 108–218; the sequence is QGACGYGDLH…RRVPCAKIGG (111 aa). The region spanning 228–307 is the Expansin-like CBD domain; it reads HFLMILPYNV…DWKCNGQSFD (80 aa).

The protein belongs to the expansin family. Expansin A subfamily.

Its subcellular location is the secreted. The protein localises to the cell wall. It localises to the membrane. Causes loosening and extension of plant cell walls by disrupting non-covalent bonding between cellulose microfibrils and matrix glucans. No enzymatic activity has been found. The protein is Expansin-A24 (EXPA24) of Arabidopsis thaliana (Mouse-ear cress).